Consider the following 95-residue polypeptide: MSLSHDDVRKIAHLARLAVSDADVEAYARSLSSILDFVEQMEAVKTDHVAPMAHPQDTAQRLRDDAVSEADQRERFQSIAPAVEAGLYLVPKVIE.

Belongs to the GatC family. As to quaternary structure, heterotrimer of A, B and C subunits.

It carries out the reaction L-glutamyl-tRNA(Gln) + L-glutamine + ATP + H2O = L-glutaminyl-tRNA(Gln) + L-glutamate + ADP + phosphate + H(+). The enzyme catalyses L-aspartyl-tRNA(Asn) + L-glutamine + ATP + H2O = L-asparaginyl-tRNA(Asn) + L-glutamate + ADP + phosphate + 2 H(+). Allows the formation of correctly charged Asn-tRNA(Asn) or Gln-tRNA(Gln) through the transamidation of misacylated Asp-tRNA(Asn) or Glu-tRNA(Gln) in organisms which lack either or both of asparaginyl-tRNA or glutaminyl-tRNA synthetases. The reaction takes place in the presence of glutamine and ATP through an activated phospho-Asp-tRNA(Asn) or phospho-Glu-tRNA(Gln). The sequence is that of Aspartyl/glutamyl-tRNA(Asn/Gln) amidotransferase subunit C from Thioalkalivibrio sulfidiphilus (strain HL-EbGR7).